The following is a 443-amino-acid chain: Xaa-Pro dipeptidase (443 aa).

Residues Asp246, Asp257, His339, Glu384, and Glu423 each contribute to the Mn(2+) site.

This sequence belongs to the peptidase M24B family. Bacterial-type prolidase subfamily. The cofactor is Mn(2+).

The catalysed reaction is Xaa-L-Pro dipeptide + H2O = an L-alpha-amino acid + L-proline. Splits dipeptides with a prolyl residue in the C-terminal position. In Escherichia coli O8 (strain IAI1), this protein is Xaa-Pro dipeptidase.